The chain runs to 149 residues: Epoxide hydrolase EphG (149 aa).

The active-site Proton donor is D93. The active-site Proton acceptor is the D122.

It belongs to the limonene-1,2-epoxide hydrolase family. As to quaternary structure, homodimer. Is also present as monomer in solution.

It carries out the reaction an epoxide + H2O = an ethanediol. The catalysed reaction is 5,6alpha-epoxy-5alpha-cholestan-3beta-ol + H2O = 5alpha-cholestane-3beta,5,6beta-triol. It catalyses the reaction 5,6beta-epoxy-5beta-cholestan-3beta-ol + H2O = 5alpha-cholestane-3beta,5,6beta-triol. Is inhibited by the anti-epileptic drug valpromide (Ki value of about 100 uM). In terms of biological role, epoxide hydrolase capable of hydrolyzing long or bulky lipophilic epoxides such as 9,10-epoxystearic acid and cholesterol 5,6-oxide in vitro. The physiological substrates have yet to be identified, but could be fatty acid or steroid derivatives. This is Epoxide hydrolase EphG (ephG) from Mycobacterium tuberculosis (strain ATCC 25618 / H37Rv).